The chain runs to 105 residues: Pyrimidine/purine nucleoside phosphorylase (105 aa).

The protein belongs to the nucleoside phosphorylase PpnP family.

The catalysed reaction is a purine D-ribonucleoside + phosphate = a purine nucleobase + alpha-D-ribose 1-phosphate. It catalyses the reaction adenosine + phosphate = alpha-D-ribose 1-phosphate + adenine. The enzyme catalyses cytidine + phosphate = cytosine + alpha-D-ribose 1-phosphate. It carries out the reaction guanosine + phosphate = alpha-D-ribose 1-phosphate + guanine. The catalysed reaction is inosine + phosphate = alpha-D-ribose 1-phosphate + hypoxanthine. It catalyses the reaction thymidine + phosphate = 2-deoxy-alpha-D-ribose 1-phosphate + thymine. The enzyme catalyses uridine + phosphate = alpha-D-ribose 1-phosphate + uracil. It carries out the reaction xanthosine + phosphate = alpha-D-ribose 1-phosphate + xanthine. Functionally, catalyzes the phosphorolysis of diverse nucleosides, yielding D-ribose 1-phosphate and the respective free bases. Can use uridine, adenosine, guanosine, cytidine, thymidine, inosine and xanthosine as substrates. Also catalyzes the reverse reactions. The sequence is that of Pyrimidine/purine nucleoside phosphorylase from Cupriavidus necator (strain ATCC 17699 / DSM 428 / KCTC 22496 / NCIMB 10442 / H16 / Stanier 337) (Ralstonia eutropha).